Here is a 528-residue protein sequence, read N- to C-terminus: Sensory rhodopsin I transducer (528 aa).

The next 2 membrane-spanning stretches (helical) occupy residues 11–31 (GAKL…VGVV) and 35–55 (VAST…INAA). 2 HAMP domains span residues 55–107 (AETV…DRLS) and 142–195 (TAYQ…ETIE). The Methyl-accepting transducer domain maps to 214-455 (TSRRVQQEVD…ATADSIADVT (242 aa)). Glu259 is subject to Glutamate methyl ester (Glu).

The protein belongs to the methyl-accepting chemotaxis (MCP) protein family. In terms of assembly, interacts with Sop1.

The protein localises to the cell membrane. Transduces signals from the phototaxis receptor sensory rhodopsin I (Sop1). In Haloarcula marismortui (strain ATCC 43049 / DSM 3752 / JCM 8966 / VKM B-1809) (Halobacterium marismortui), this protein is Sensory rhodopsin I transducer (htr1).